We begin with the raw amino-acid sequence, 245 residues long: Uridylate kinase (245 aa).

12-15 (KLSG) provides a ligand contact to ATP. The segment at 20–25 (GEKGVG) is involved in allosteric activation by GTP. Residue G54 participates in UMP binding. Residues G55 and R59 each contribute to the ATP site. UMP contacts are provided by residues D74 and 135 to 142 (IGSPYFST). Positions 163, 169, and 172 each coordinate ATP.

It belongs to the UMP kinase family. As to quaternary structure, homohexamer.

The protein localises to the cytoplasm. It carries out the reaction UMP + ATP = UDP + ADP. Its pathway is pyrimidine metabolism; CTP biosynthesis via de novo pathway; UDP from UMP (UMPK route): step 1/1. Allosterically activated by GTP. Inhibited by UTP. Its function is as follows. Catalyzes the reversible phosphorylation of UMP to UDP. This is Uridylate kinase from Streptococcus thermophilus (strain ATCC BAA-491 / LMD-9).